Reading from the N-terminus, the 257-residue chain is Alcohol dehydrogenase 1 (257 aa).

9–33 (VFVGGLGFIGYEACKTLITRDLASL) lines the NAD(+) pocket. Ser137 contributes to the substrate binding site. Tyr150 acts as the Proton acceptor in catalysis.

It belongs to the short-chain dehydrogenases/reductases (SDR) family. As to quaternary structure, homodimer.

The enzyme catalyses a primary alcohol + NAD(+) = an aldehyde + NADH + H(+). The catalysed reaction is a secondary alcohol + NAD(+) = a ketone + NADH + H(+). This is Alcohol dehydrogenase 1 (ADH1) from Ceratitis cosyra (Mango fruit fly).